We begin with the raw amino-acid sequence, 643 residues long: Phosphomethylpyrimidine synthase (643 aa).

Substrate-binding positions include Asn-248, Met-277, Tyr-306, His-342, 362–364, 403–406, and Glu-442; these read SRG and DGLR. His-446 serves as a coordination point for Zn(2+). Position 469 (Tyr-469) interacts with substrate. His-510 is a binding site for Zn(2+). Residues Cys-590, Cys-593, and Cys-598 each coordinate [4Fe-4S] cluster.

This sequence belongs to the ThiC family. In terms of assembly, homodimer. Requires [4Fe-4S] cluster as cofactor.

It carries out the reaction 5-amino-1-(5-phospho-beta-D-ribosyl)imidazole + S-adenosyl-L-methionine = 4-amino-2-methyl-5-(phosphooxymethyl)pyrimidine + CO + 5'-deoxyadenosine + formate + L-methionine + 3 H(+). The protein operates within cofactor biosynthesis; thiamine diphosphate biosynthesis. In terms of biological role, catalyzes the synthesis of the hydroxymethylpyrimidine phosphate (HMP-P) moiety of thiamine from aminoimidazole ribotide (AIR) in a radical S-adenosyl-L-methionine (SAM)-dependent reaction. In Burkholderia lata (strain ATCC 17760 / DSM 23089 / LMG 22485 / NCIMB 9086 / R18194 / 383), this protein is Phosphomethylpyrimidine synthase.